Reading from the N-terminus, the 485-residue chain is uncharacterized protein (485 aa).

The next 11 helical transmembrane spans lie at 79–99 (LVTL…LIFA), 117–137 (VFAL…FLVF), 139–159 (FFSG…LADL), 170–190 (VIYF…SGFI), 199–219 (WEFW…FLLL), 275–295 (ILIC…LVLI), 313–333 (GLMY…AMPI), 355–375 (LPMG…FGWT), 380–400 (IFWF…IMTS), 421–441 (GVKI…ESLF), and 448–468 (WGCT…PILF).

This sequence belongs to the major facilitator superfamily. CAR1 family.

The protein localises to the membrane. This is an uncharacterized protein from Schizosaccharomyces pombe (strain 972 / ATCC 24843) (Fission yeast).